The sequence spans 141 residues: D-aminoacyl-tRNA deacylase (141 aa).

Positions 133 to 134 match the Gly-cisPro motif, important for rejection of L-amino acids motif; sequence GP.

This sequence belongs to the DTD family. Homodimer.

The protein resides in the cytoplasm. The enzyme catalyses glycyl-tRNA(Ala) + H2O = tRNA(Ala) + glycine + H(+). It carries out the reaction a D-aminoacyl-tRNA + H2O = a tRNA + a D-alpha-amino acid + H(+). Functionally, an aminoacyl-tRNA editing enzyme that deacylates mischarged D-aminoacyl-tRNAs. Also deacylates mischarged glycyl-tRNA(Ala), protecting cells against glycine mischarging by AlaRS. Acts via tRNA-based rather than protein-based catalysis; rejects L-amino acids rather than detecting D-amino acids in the active site. By recycling D-aminoacyl-tRNA to D-amino acids and free tRNA molecules, this enzyme counteracts the toxicity associated with the formation of D-aminoacyl-tRNA entities in vivo and helps enforce protein L-homochirality. The polypeptide is D-aminoacyl-tRNA deacylase (Beutenbergia cavernae (strain ATCC BAA-8 / DSM 12333 / CCUG 43141 / JCM 11478 / NBRC 16432 / NCIMB 13614 / HKI 0122)).